Consider the following 216-residue polypeptide: Protein Nef (216 aa).

The tract at residues 1 to 32 (MGGKWSKHSVPGWSTVRERMRRAEPATDRVRQ) is disordered. Residue Gly-2 is the site of N-myristoyl glycine; by host attachment. A Phosphoserine; by host modification is found at Ser-6. Positions 16-32 (VRERMRRAEPATDRVRQ) are enriched in basic and acidic residues. Residues 72–75 (EDEE) form an acidic; interacts with host PACS1 and PACS2; stabilizes the interaction of NEF/MHC-I with host AP1M1; necessary for MHC-I internalization region. The segment at 79 to 88 (PVRPQVPLRP) is SH3-binding; interaction with Src family tyrosine kinases. Positions 82 to 85 (PQVP) match the PxxP; stabilizes the interaction of NEF/MHC-I with host AP1M1; necessary for MHC-I internalization motif. A mediates dimerization, Nef-PTE1 interaction region spans residues 118 to 134 (DILDLWIYHTQGYFPDW). The segment at 158-190 (VDPEKVEEANEGENNCLLHPMSQHGMDDPEKEV) is binding to ATP6V1H. Positions 174–175 (LL) match the Dileucine internalization motif; necessary for CD4 internalization motif. Positions 184-185 (DD) match the Diacidic; necessary for CD4 internalization motif.

This sequence belongs to the lentivirus primate group Nef protein family. Monomer; cytosolic form. Homodimer; membrane bound form. Interacts with Nef associated p21-activated kinase (PAK2); this interaction activates PAK2. Associates with the Nef-MHC-I-AP1 complex; this complex is required for MHC-I internalization. Interacts (via C-terminus) with host PI3-kinase. Interacts with host PACS1; this interaction seems to be weak. Interacts with host PACS2. Interacts with host LCK and MAPK3; these interactions inhibit the kinase activity of the latter. Interacts with host ATP6V1H; this interaction may play a role in CD4 endocytosis. Associates with the CD4-Nef-AP2 complex; this complex is required for CD4 internalization. Interacts with host AP2 subunit alpha and AP2 subunit sigma2. Interacts with TCR-zeta chain; this interaction up-regulates the Fas ligand (FasL) surface expression. Interacts with host HCK, LYN, and SRC; these interactions activate the Src family kinases. Interacts with MAP3K5; this interaction inhibits the Fas and TNFR-mediated death signals. Interacts with beta-COP and PTE1. Interacts with human RACK1; this increases Nef phosphorylation by PKC. Interacts with TP53; this interaction decreases the half-life of TP53, protecting the infected cell against p53-mediated apoptosis. The virion-associated Nef proteins are cleaved by the viral protease to release the soluble C-terminal core protein. Nef is probably cleaved concomitantly with viral structural proteins on maturation of virus particles. Post-translationally, myristoylated. In terms of processing, phosphorylated on serine residues, probably by host PKCdelta and theta.

The protein resides in the host cell membrane. It localises to the virion. It is found in the secreted. The protein localises to the host Golgi apparatus membrane. In terms of biological role, factor of infectivity and pathogenicity, required for optimal virus replication. Alters numerous pathways of T-lymphocyte function and down-regulates immunity surface molecules in order to evade host defense and increase viral infectivity. Alters the functionality of other immunity cells, like dendritic cells, monocytes/macrophages and NK cells. Its function is as follows. In infected CD4(+) T-lymphocytes, down-regulates the surface MHC-I, mature MHC-II, CD4, CD28, CCR5 and CXCR4 molecules. Mediates internalization and degradation of host CD4 through the interaction of with the cytoplasmic tail of CD4, the recruitment of AP-2 (clathrin adapter protein complex 2), internalization through clathrin coated pits, and subsequent transport to endosomes and lysosomes for degradation. Diverts host MHC-I molecules to the trans-Golgi network-associated endosomal compartments by an endocytic pathway to finally target them for degradation. MHC-I down-regulation may involve AP-1 (clathrin adapter protein complex 1) or possibly Src family kinase-ZAP70/Syk-PI3K cascade recruited by PACS2. In consequence infected cells are masked for immune recognition by cytotoxic T-lymphocytes. Decreasing the number of immune receptors also prevents reinfection by more HIV particles (superinfection). Down-regulates host SERINC3 and SERINC5 thereby excluding these proteins from the viral particles. Virion infectivity is drastically higher when SERINC3 or SERINC5 are excluded from the viral envelope, because these host antiviral proteins impair the membrane fusion event necessary for subsequent virion penetration. Bypasses host T-cell signaling by inducing a transcriptional program nearly identical to that of anti-CD3 cell activation. Interaction with TCR-zeta chain up-regulates the Fas ligand (FasL). Increasing surface FasL molecules and decreasing surface MHC-I molecules on infected CD4(+) cells send attacking cytotoxic CD8+ T-lymphocytes into apoptosis. Functionally, plays a role in optimizing the host cell environment for viral replication without causing cell death by apoptosis. Protects the infected cells from apoptosis in order to keep them alive until the next virus generation is ready to strike. Inhibits the Fas and TNFR-mediated death signals by blocking MAP3K5/ASK1. Decreases the half-life of TP53, protecting the infected cell against p53-mediated apoptosis. Inhibits the apoptotic signals regulated by the Bcl-2 family proteins through the formation of a Nef/PI3-kinase/PAK2 complex that leads to activation of PAK2 and induces phosphorylation of host BAD. In terms of biological role, extracellular Nef protein targets CD4(+) T-lymphocytes for apoptosis by interacting with CXCR4 surface receptors. This Homo sapiens (Human) protein is Protein Nef.